A 163-amino-acid chain; its full sequence is 3-dehydroquinate dehydratase (163 aa).

Residue tyrosine 28 is the Proton acceptor of the active site. Substrate-binding residues include asparagine 80, histidine 86, and aspartate 93. Histidine 106 (proton donor) is an active-site residue. Residues 107–108 (IS) and arginine 117 contribute to the substrate site.

The protein belongs to the type-II 3-dehydroquinase family. In terms of assembly, homododecamer.

The enzyme catalyses 3-dehydroquinate = 3-dehydroshikimate + H2O. Its pathway is metabolic intermediate biosynthesis; chorismate biosynthesis; chorismate from D-erythrose 4-phosphate and phosphoenolpyruvate: step 3/7. In terms of biological role, catalyzes a trans-dehydration via an enolate intermediate. In Bradyrhizobium sp. (strain BTAi1 / ATCC BAA-1182), this protein is 3-dehydroquinate dehydratase.